The chain runs to 290 residues: Proteasome subunit beta (290 aa).

A propeptide spans 1 to 58 (MTTSGGLTGPGAFGRLPQPFHQPGITSFVEFLALQAPDLLPGRLQMPAGGQPPEVPHG) (removed in mature form; by autocatalysis). Thr59 serves as the catalytic Nucleophile.

It belongs to the peptidase T1B family. The 20S proteasome core is composed of 14 alpha and 14 beta subunits that assemble into four stacked heptameric rings, resulting in a barrel-shaped structure. The two inner rings, each composed of seven catalytic beta subunits, are sandwiched by two outer rings, each composed of seven alpha subunits. The catalytic chamber with the active sites is on the inside of the barrel. Has a gated structure, the ends of the cylinder being occluded by the N-termini of the alpha-subunits. Is capped by the proteasome-associated ATPase, ARC.

The protein resides in the cytoplasm. It catalyses the reaction Cleavage of peptide bonds with very broad specificity.. It functions in the pathway protein degradation; proteasomal Pup-dependent pathway. With respect to regulation, the formation of the proteasomal ATPase ARC-20S proteasome complex, likely via the docking of the C-termini of ARC into the intersubunit pockets in the alpha-rings, may trigger opening of the gate for substrate entry. Interconversion between the open-gate and close-gate conformations leads to a dynamic regulation of the 20S proteasome proteolysis activity. Its function is as follows. Component of the proteasome core, a large protease complex with broad specificity involved in protein degradation. This chain is Proteasome subunit beta, found in Acidothermus cellulolyticus (strain ATCC 43068 / DSM 8971 / 11B).